We begin with the raw amino-acid sequence, 234 residues long: MAAKIFCLLMLLGLSASAATATIFPQCSQAPIASLLPPYLSSAVSSVCENPILQPYRIQQAIAAGILPLSPLFLQQSSALLQQLPLVHLLAQNIRAQQLQQLVLANLAAYSQQQQFLPFNQLGSLNSASYLQQQQLPFSQLPAAYPQQFLPFNQLAALNSPAYLQQQQLLPFSQLAGVSPATFLTQPQLLPFYQHVAPNAGTLLQLQQLLPFNQLALTNPAVFYQQPIIGGALF.

A signal peptide spans 1 to 21 (MAAKIFCLLMLLGLSASAATA).

The protein belongs to the zein family.

Its function is as follows. Zeins are major seed storage proteins. This chain is Zein-alpha 19B1, found in Zea mays (Maize).